Consider the following 1235-residue polypeptide: Phosphorylase b kinase regulatory subunit alpha, liver isoform (1235 aa).

A phosphoserine mark is found at Ser697, Ser731, and Ser737. The tract at residues 808–838 (LSELYGKAGLNQEWGLIRYISGLLRKKVEVL) is calmodulin-binding. The segment covering 976–986 (SSASSPAISIH) has biased composition (low complexity). Positions 976–1002 (SSASSPAISIHEVGHTGVTKTERSGIN) are disordered. Phosphoserine occurs at positions 984, 1016, and 1044. Over residues 1032 to 1053 (AYSKSVRSSTPSSPTGTSSSDS) the composition is skewed to low complexity. The segment at 1032-1060 (AYSKSVRSSTPSSPTGTSSSDSGGHHISW) is disordered. Positions 1059–1099 (SWGERQGQWLRRRRLDGAINRVPVGFYQRVWKILQKCHGLS) are calmodulin-binding. The S-farnesyl cysteine moiety is linked to residue Cys1232.

The protein belongs to the phosphorylase b kinase regulatory chain family. Hexadecamer of 4 heterotetramers, each composed of alpha, beta, gamma, and delta subunits. Alpha (PHKA1 or PHKA2) and beta (PHKB) are regulatory subunits, gamma (PHKG1 or PHKG2) is the catalytic subunit, and delta is calmodulin. In terms of processing, although the final Cys may be farnesylated, the terminal tripeptide is probably not removed, and the C-terminus is not methylated. As to expression, predominantly expressed in liver and other non-muscle tissues.

The protein localises to the cell membrane. It functions in the pathway glycan biosynthesis; glycogen metabolism. By phosphorylation of various serine residues and by calcium. Functionally, phosphorylase b kinase catalyzes the phosphorylation of serine in certain substrates, including troponin I. The alpha chain may bind calmodulin. The polypeptide is Phosphorylase b kinase regulatory subunit alpha, liver isoform (PHKA2) (Oryctolagus cuniculus (Rabbit)).